Reading from the N-terminus, the 1938-residue chain is Myosin-1 (1938 aa).

The disordered stretch occupies residues 1–27 (MSLEHEKDPGWQYLKRSREQQLADQSR). The segment covering 16–27 (RSREQQLADQSR) has biased composition (basic and acidic residues). Residues 30–80 (DSKKNVWIPDAEEGYIEGVIKGPGPKADTVIVTAGGKDVTLKKDIVQEVNP) enclose the Myosin N-terminal SH3-like domain. The Myosin motor domain occupies 84–785 (EKTEDMSNLT…VVAHIEDLRD (702 aa)). Residue Lys-128 is modified to N6,N6,N6-trimethyllysine. An ATP-binding site is contributed by 177-184 (GESGAGKT). 2 actin-binding regions span residues 660–682 (LNKLMTMLHKTHPHFIRCIIPNE) and 764–778 (RIGHTKVFFKAGVVA). Positions 846–1170 (QLKCGKMAEE…NKQLEIQQDN (325 aa)) are alpha-helical tailpiece (short S2). The rodlike tail (S2 and LMM domains) stretch occupies residues 846 to 1938 (QLKCGKMAEE…GQVVRSATNK (1093 aa)). Positions 846–1938 (QLKCGKMAEE…GQVVRSATNK (1093 aa)) form a coiled coil. A disordered region spans residues 919–951 (RQEVEKSLNDANDRLSEHEEKNADLEKQRRKAQ). Basic and acidic residues predominate over residues 920–951 (QEVEKSLNDANDRLSEHEEKNADLEKQRRKAQ). The segment at 1171–1938 (NKKKDSEIIK…GQVVRSATNK (768 aa)) is light meromyosin (LMM).

This sequence belongs to the TRAFAC class myosin-kinesin ATPase superfamily. Myosin family. In terms of assembly, muscle myosin is a hexameric protein that consists of 2 heavy chain subunits (MHC), 2 alkali light chain subunits (MLC) and 2 regulatory light chain subunits (MLC-2). Interacts with itr-1 (via c-terminal coiled coil domain). Found exclusively in the pharyngeal muscle.

The protein localises to the cytoplasm. It localises to the myofibril. In terms of biological role, muscle contraction. The polypeptide is Myosin-1 (Caenorhabditis elegans).